Consider the following 319-residue polypeptide: Protein-methionine-sulfoxide reductase catalytic subunit MsrP (319 aa).

A signal peptide (tat-type signal) is located at residues 1–40 (MHKLNENDVTPEHIFFERRKIIQSMGLMGAASLLPRFSLA). Residues Asn-73, 76–77 (YE), Cys-131, Thr-166, Asn-218, Arg-223, and 234–236 (NIK) contribute to the Mo-molybdopterin site.

Belongs to the MsrP family. In terms of assembly, heterodimer of a catalytic subunit (MsrP) and a heme-binding subunit (MsrQ). It depends on Mo-molybdopterin as a cofactor. Post-translationally, predicted to be exported by the Tat system. The position of the signal peptide cleavage has not been experimentally proven.

The protein resides in the periplasm. It catalyses the reaction L-methionyl-[protein] + a quinone + H2O = L-methionyl-(S)-S-oxide-[protein] + a quinol. The enzyme catalyses L-methionyl-[protein] + a quinone + H2O = L-methionyl-(R)-S-oxide-[protein] + a quinol. In terms of biological role, part of the MsrPQ system that repairs oxidized periplasmic proteins containing methionine sulfoxide residues (Met-O), using respiratory chain electrons. Thus protects these proteins from oxidative-stress damage caused by reactive species of oxygen and chlorine generated by the host defense mechanisms. MsrPQ is essential for the maintenance of envelope integrity under bleach stress, rescuing a wide series of structurally unrelated periplasmic proteins from methionine oxidation. The catalytic subunit MsrP is non-stereospecific, being able to reduce both (R-) and (S-) diastereoisomers of methionine sulfoxide. This is Protein-methionine-sulfoxide reductase catalytic subunit MsrP from Pasteurella multocida (strain Pm70).